Here is a 37-residue protein sequence, read N- to C-terminus: DGECGDKDEPCCGRPDGAKVCNDPWVCILTSSRCENP.

Disulfide bonds link C4–C12, C11–C27, and C21–C34.

Expressed by the venom duct.

It is found in the secreted. This toxin reduces the outward currents that are due to the opening of voltage-gated potassium channels in DRG neurons. In addition, leftward shift in the presence of this toxin is observed in averaged normalized conductance-voltage plot of outward sodium currents (Nav1.2/SCN2A). This Conus monile (Necklace cone) protein is Delta/kappa-conotoxin Mo3964.